The sequence spans 630 residues: MKFNKLNLSHCISFYISEVSEVFFESINQHPSRDFVNNILQKIKTTLSEEELEKLNSIEEVTKDEKIVIMLNHVLKKIVSKTGSSKCDLFNVIKQDRFNSPVYIQSINAFENNLINNEFAERRYDYLIEVNKNSYLKKFVNSIRISFFLDLRAQILSGSFTLNLVNKSIEKQKKTEIFKDIFVNALVKHFICNQLYPISLNSFIFDSENPSNKLALKERIKLLKTNWNSLFFDKFYNCLNNKNKQQLQETSDEMFYAVINTYLIMLISVEELRVYFTSKEPALILKVLDKKNTLREDPDQNPETDLYELIQFIEQNYLKKDKKTSWNKKKVQDLEQLLEEINKINLETKNESLAYPDEITELEIDNDNFVSTKQVFRNQLELQLLHGIVINPEKYGIGMWSSYFADWSEYKNLIEQMLNPKSGNDFYQFEKDIDESICQINKKYLTFISSDSNTFLIVKNDDVKVISNYVWAQLFFETRRWIINDIEFDLYEKGFDKSHFSRNIALLESLSFSWLDPFYGLTSIKEIMQKIDSKSNLKTSIEEMVNRFKHEQRINKKDNERVLMIFAYIAAFVVGFINFFSMVFTILTVSDLNAGLTVPNIIVISIASVLAFILIVIAVLFRFKWKHIKH.

The next 4 membrane-spanning stretches (helical) occupy residues 254 to 274, 504 to 524, 564 to 584, and 601 to 621; these read MFYA…ELRV, IALL…LTSI, MIFA…SMVF, and IIVI…AVLF.

The protein localises to the cell membrane. This is an uncharacterized protein from Mycoplasma genitalium (strain ATCC 33530 / DSM 19775 / NCTC 10195 / G37) (Mycoplasmoides genitalium).